The following is a 161-amino-acid chain: UPF0225 protein GSU1048 (161 aa).

It belongs to the UPF0225 family.

The polypeptide is UPF0225 protein GSU1048 (Geobacter sulfurreducens (strain ATCC 51573 / DSM 12127 / PCA)).